Reading from the N-terminus, the 410-residue chain is Putative ankyrin repeat protein FPV240 (410 aa).

ANK repeat units follow at residues 33-62 (NGYS…YPDY), 66-95 (DIES…FIND), 100-129 (KGNT…DTDV), 133-162 (DRFT…CTNI), 166-195 (YGCT…NIDY), and 200-229 (PCVT…DSNI).

The sequence is that of Putative ankyrin repeat protein FPV240 from Vertebrata (FPV).